A 170-amino-acid polypeptide reads, in one-letter code: MORN repeat-containing protein 5 (170 aa).

3 MORN repeats span residues 8–30 (YFGEYINGRMEGSAEYILPTDTR), 31–53 (YIGEMKDGMFHGEGTLFFPSGSR), and 54–75 (FDAIWKKGLVVKGKYTFNDGLQ).

In terms of tissue distribution, only detected in testis (at protein level).

The protein localises to the cell projection. It is found in the cilium. Its subcellular location is the flagellum. The sequence is that of MORN repeat-containing protein 5 (Morn5) from Mus musculus (Mouse).